A 140-amino-acid chain; its full sequence is Nucleoside diphosphate kinase (140 aa).

ATP is bound by residues K9, F57, R85, T91, R102, and N112. The active-site Pros-phosphohistidine intermediate is the H115.

The protein belongs to the NDK family. As to quaternary structure, homotetramer. Mg(2+) is required as a cofactor.

Its subcellular location is the cytoplasm. The enzyme catalyses a 2'-deoxyribonucleoside 5'-diphosphate + ATP = a 2'-deoxyribonucleoside 5'-triphosphate + ADP. The catalysed reaction is a ribonucleoside 5'-diphosphate + ATP = a ribonucleoside 5'-triphosphate + ADP. In terms of biological role, major role in the synthesis of nucleoside triphosphates other than ATP. The ATP gamma phosphate is transferred to the NDP beta phosphate via a ping-pong mechanism, using a phosphorylated active-site intermediate. The sequence is that of Nucleoside diphosphate kinase from Chlorobium limicola (strain DSM 245 / NBRC 103803 / 6330).